Reading from the N-terminus, the 77-residue chain is UPF0270 protein Spro_4577 (77 aa).

This sequence belongs to the UPF0270 family.

The sequence is that of UPF0270 protein Spro_4577 from Serratia proteamaculans (strain 568).